The primary structure comprises 868 residues: Translation initiation factor IF-2 (868 aa).

Residues 199–209 are compositionally biased toward basic and acidic residues; the sequence is SKKEEVKPEKV. The disordered stretch occupies residues 199–269; it reads SKKEEVKPEK…GTEKSDKYRE (71 aa). Positions 249 to 260 are enriched in basic residues; it reads RGGRSKFKKKKG. Residues 368–537 form the tr-type G domain; the sequence is GRAPVVTIMG…LLQSEVLELK (170 aa). The interval 377 to 384 is G1; it reads GHVDHGKT. Position 377–384 (377–384) interacts with GTP; sequence GHVDHGKT. A G2 region spans residues 402-406; it reads GITQH. The tract at residues 423-426 is G3; the sequence is DTPG. GTP is bound by residues 423-427 and 477-480; these read DTPGH and NKMD. Residues 477 to 480 form a G4 region; that stretch reads NKMD. The tract at residues 513–515 is G5; the sequence is SAK.

This sequence belongs to the TRAFAC class translation factor GTPase superfamily. Classic translation factor GTPase family. IF-2 subfamily.

The protein resides in the cytoplasm. One of the essential components for the initiation of protein synthesis. Protects formylmethionyl-tRNA from spontaneous hydrolysis and promotes its binding to the 30S ribosomal subunits. Also involved in the hydrolysis of GTP during the formation of the 70S ribosomal complex. This is Translation initiation factor IF-2 from Legionella pneumophila (strain Paris).